The primary structure comprises 388 residues: Chaperone protein DnaJ (388 aa).

One can recognise a J domain in the interval 5-69 (DYYDVLGVDK…QKKAQYDQFG (65 aa)). Residues 145–227 (GKKTDITYTR…CHGKGTIDKK (83 aa)) form a CR-type zinc finger. Cys158, Cys161, Cys175, Cys178, Cys201, Cys204, Cys215, and Cys218 together coordinate Zn(2+). 4 CXXCXGXG motif repeats span residues 158–165 (CPTCDGSG), 175–182 (CDKCHGTG), 201–208 (CDKCGGRG), and 215–222 (CQTCHGKG).

It belongs to the DnaJ family. Homodimer. It depends on Zn(2+) as a cofactor.

Its subcellular location is the cytoplasm. Functionally, participates actively in the response to hyperosmotic and heat shock by preventing the aggregation of stress-denatured proteins and by disaggregating proteins, also in an autonomous, DnaK-independent fashion. Unfolded proteins bind initially to DnaJ; upon interaction with the DnaJ-bound protein, DnaK hydrolyzes its bound ATP, resulting in the formation of a stable complex. GrpE releases ADP from DnaK; ATP binding to DnaK triggers the release of the substrate protein, thus completing the reaction cycle. Several rounds of ATP-dependent interactions between DnaJ, DnaK and GrpE are required for fully efficient folding. Also involved, together with DnaK and GrpE, in the DNA replication of plasmids through activation of initiation proteins. This is Chaperone protein DnaJ from Lactobacillus gasseri (strain ATCC 33323 / DSM 20243 / BCRC 14619 / CIP 102991 / JCM 1131 / KCTC 3163 / NCIMB 11718 / NCTC 13722 / AM63).